The primary structure comprises 436 residues: Gamma-glutamyl phosphate reductase (436 aa).

Belongs to the gamma-glutamyl phosphate reductase family.

The protein resides in the cytoplasm. The catalysed reaction is L-glutamate 5-semialdehyde + phosphate + NADP(+) = L-glutamyl 5-phosphate + NADPH + H(+). The protein operates within amino-acid biosynthesis; L-proline biosynthesis; L-glutamate 5-semialdehyde from L-glutamate: step 2/2. In terms of biological role, catalyzes the NADPH-dependent reduction of L-glutamate 5-phosphate into L-glutamate 5-semialdehyde and phosphate. The product spontaneously undergoes cyclization to form 1-pyrroline-5-carboxylate. In Prochlorococcus marinus (strain AS9601), this protein is Gamma-glutamyl phosphate reductase.